The following is a 473-amino-acid chain: Adenosylhomocysteinase (473 aa).

Substrate-binding residues include threonine 60, aspartate 135, and glutamate 197. Position 198-200 (198-200 (TTT)) interacts with NAD(+). Substrate-binding residues include lysine 227 and aspartate 231. NAD(+) contacts are provided by residues asparagine 232, 261–266 (GFGDVG), glutamate 284, asparagine 319, 340–342 (IGH), and asparagine 385.

This sequence belongs to the adenosylhomocysteinase family. It depends on NAD(+) as a cofactor.

The protein localises to the cytoplasm. The catalysed reaction is S-adenosyl-L-homocysteine + H2O = L-homocysteine + adenosine. It participates in amino-acid biosynthesis; L-homocysteine biosynthesis; L-homocysteine from S-adenosyl-L-homocysteine: step 1/1. In terms of biological role, may play a key role in the regulation of the intracellular concentration of adenosylhomocysteine. The chain is Adenosylhomocysteinase from Bradyrhizobium sp. (strain BTAi1 / ATCC BAA-1182).